Reading from the N-terminus, the 368-residue chain is Lipoyl synthase, chloroplastic (368 aa).

Disordered stretches follow at residues 1 to 30 and 42 to 61; these read MQSSLARPLRPPVLAGCGGRRGHGAPRGSV and PTVGTASRAPAGPYTGRDPE. Cys-94, Cys-99, Cys-105, Cys-131, Cys-135, Cys-138, and Ser-346 together coordinate [4Fe-4S] cluster. Residues 114-335 form the Radical SAM core domain; sequence GEGDGIATAT…KEYGESVGFR (222 aa).

This sequence belongs to the radical SAM superfamily. Lipoyl synthase family. Requires [4Fe-4S] cluster as cofactor.

The protein resides in the plastid. It localises to the chloroplast. It catalyses the reaction [[Fe-S] cluster scaffold protein carrying a second [4Fe-4S](2+) cluster] + N(6)-octanoyl-L-lysyl-[protein] + 2 oxidized [2Fe-2S]-[ferredoxin] + 2 S-adenosyl-L-methionine + 4 H(+) = [[Fe-S] cluster scaffold protein] + N(6)-[(R)-dihydrolipoyl]-L-lysyl-[protein] + 4 Fe(3+) + 2 hydrogen sulfide + 2 5'-deoxyadenosine + 2 L-methionine + 2 reduced [2Fe-2S]-[ferredoxin]. The protein operates within protein modification; protein lipoylation via endogenous pathway; protein N(6)-(lipoyl)lysine from octanoyl-[acyl-carrier-protein]: step 2/2. Catalyzes the radical-mediated insertion of two sulfur atoms into the C-6 and C-8 positions of the octanoyl moiety bound to the lipoyl domains of lipoate-dependent enzymes, thereby converting the octanoylated domains into lipoylated derivatives. This chain is Lipoyl synthase, chloroplastic, found in Sorghum bicolor (Sorghum).